Here is a 369-residue protein sequence, read N- to C-terminus: Molybdenum import ATP-binding protein ModC (369 aa).

The region spanning 4–239 (LQLRAVVADR…PRSRFGARIA (236 aa)) is the ABC transporter domain. 31–38 (GPNGAGKS) serves as a coordination point for ATP. The Mop domain maps to 293 to 361 (HGSPRNIVGL…VKAQEVALHP (69 aa)).

This sequence belongs to the ABC transporter superfamily. Molybdate importer (TC 3.A.1.8) family. In terms of assembly, the complex is composed of two ATP-binding proteins (ModC), two transmembrane proteins (ModB) and a solute-binding protein (ModA).

It is found in the cell membrane. It catalyses the reaction molybdate(out) + ATP + H2O = molybdate(in) + ADP + phosphate + H(+). Its function is as follows. Part of the ABC transporter complex ModABC involved in molybdenum import. Responsible for energy coupling to the transport system. The chain is Molybdenum import ATP-binding protein ModC from Mycobacterium tuberculosis (strain CDC 1551 / Oshkosh).